The following is a 459-amino-acid chain: Elongation factor 1-alpha (459 aa).

Gly-2 carries the n,N,N-trimethylglycine modification. Lys-3 bears the N6,N6-dimethyllysine; alternate mark. Lys-3 is subject to N6-methyllysine; alternate. The 235-residue stretch at 5–239 (KSHINVVVIG…DAIDPPSRPT (235 aa)) folds into the tr-type G domain. Residues 14-21 (GHVDSGKS) are G1. 14–21 (GHVDSGKS) is a GTP binding site. At Lys-30 the chain carries N6-methyllysine. The tract at residues 70–74 (GITID) is G2. Position 79 is an N6,N6,N6-trimethyllysine (Lys-79). Residues 91-94 (DAPG) form a G3 region. GTP contacts are provided by residues 91 to 95 (DAPGH) and 153 to 156 (NKMD). Positions 153–156 (NKMD) are G4. The G5 stretch occupies residues 192–194 (SGF). The residue at position 315 (Lys-315) is an N6,N6-dimethyllysine; alternate. Lys-315 is subject to N6-methyllysine; alternate. Lys-389 is modified (N6-methyllysine).

This sequence belongs to the TRAFAC class translation factor GTPase superfamily. Classic translation factor GTPase family. EF-Tu/EF-1A subfamily.

It localises to the cytoplasm. In terms of biological role, this protein promotes the GTP-dependent binding of aminoacyl-tRNA to the A-site of ribosomes during protein biosynthesis. The chain is Elongation factor 1-alpha (TEF1) from Aureobasidium pullulans (Black yeast).